A 108-amino-acid polypeptide reads, in one-letter code: MKKLILIAIMASGLVACAQSTAPQEDSRLKEAYSACINTAQGSPEKIEACQSVLNVLKKEKQHQQFADQESVRVLDYQQCLRATQTGNDQAVKADCDKVWQEIRSNNK.

The first 16 residues, Met-1–Ala-16, serve as a signal peptide directing secretion. The N-palmitoyl cysteine moiety is linked to residue Cys-17. Cys-17 carries the S-diacylglycerol cysteine lipid modification.

The protein resides in the cell membrane. This is an uncharacterized protein from Escherichia coli (strain K12).